Consider the following 912-residue polypeptide: Metabotropic glutamate receptor 4 (912 aa).

Positions 1 to 32 are cleaved as a signal peptide; sequence MSGKGGWAWWWARLPLCLLLSLYAPWVPSSLG. Residues 33–587 are Extracellular-facing; sequence KPKGHPHMNS…IVKLEWDSPW (555 aa). C67 and C109 are disulfide-bonded. An N-linked (GlcNAc...) asparagine glycan is attached at N98. Residues S159, 180-182, and Y230 each bind L-glutamate; that span reads AST. Cystine bridges form between C249-C538, C372-C388, C428-C435, C520-C539, C524-C542, C545-C557, and C560-C573. N301 is a glycosylation site (N-linked (GlcNAc...) asparagine). D312 is an L-glutamate binding site. K405 contacts L-glutamate. N-linked (GlcNAc...) asparagine glycosylation is found at N454 and N484. N569 carries an N-linked (GlcNAc...) asparagine glycan. A helical membrane pass occupies residues 588–610; it reads AVLPLFLAVVGIAATLFVVVTFV. Topologically, residues 611 to 624 are cytoplasmic; sequence RYNDTPIVKASGRE. Residues 625-645 traverse the membrane as a helical segment; sequence LSYVLLAGIFLCYATTFLMIA. At 646 to 656 the chain is on the extracellular side; that stretch reads EPDLGTCSLRR. The chain crosses the membrane as a helical span at residues 657–675; sequence IFLGLGMSISYAALLTKTN. The Cytoplasmic segment spans residues 676 to 699; it reads RIYRIFEQGKRSVSAPRFISPASQ. Residues 700-720 traverse the membrane as a helical segment; it reads LAITFILISLQLLGICVWFVV. Topologically, residues 721–750 are extracellular; it reads DPSHSVVDFQDQRTLDPRFARGVLKCDISD. Residues 751–772 form a helical membrane-spanning segment; that stretch reads LSLICLLGYSMLLMVTCTVYAI. Residues 773–785 lie on the Cytoplasmic side of the membrane; it reads KTRGVPETFNEAK. A helical transmembrane segment spans residues 786–808; the sequence is PIGFTMYTTCIVWLAFIPIFFGT. Over 809–821 the chain is Extracellular; the sequence is SQSADKLYIQTTT. The chain crosses the membrane as a helical span at residues 822 to 847; the sequence is LTVSVSLSASVSLGMLYMPKVYIILF. The Cytoplasmic portion of the chain corresponds to 848 to 912; sequence HPEQNVPKRK…TYVTYTNHAI (65 aa).

The protein belongs to the G-protein coupled receptor 3 family. Interacts with PICK1. As to expression, is widely distributed in the CNS. Predominant expression is seen in the granule cells of the cerebellum.

The protein resides in the cell membrane. Functionally, G-protein coupled receptor for glutamate. Ligand binding causes a conformation change that triggers signaling via guanine nucleotide-binding proteins (G proteins) and modulates the activity of down-stream effectors. Signaling inhibits adenylate cyclase activity. This Rattus norvegicus (Rat) protein is Metabotropic glutamate receptor 4 (Grm4).